Reading from the N-terminus, the 125-residue chain is Small ribosomal subunit protein uS13 (125 aa).

The interval 101 to 125 is disordered; the sequence is QRTKTNARTRKGKRKTVANKKIAAK.

It belongs to the universal ribosomal protein uS13 family. As to quaternary structure, part of the 30S ribosomal subunit. Forms a loose heterodimer with protein S19. Forms two bridges to the 50S subunit in the 70S ribosome.

Located at the top of the head of the 30S subunit, it contacts several helices of the 16S rRNA. In the 70S ribosome it contacts the 23S rRNA (bridge B1a) and protein L5 of the 50S subunit (bridge B1b), connecting the 2 subunits; these bridges are implicated in subunit movement. Contacts the tRNAs in the A and P-sites. This chain is Small ribosomal subunit protein uS13, found in Borrelia duttonii (strain Ly).